Consider the following 288-residue polypeptide: Energy-coupling factor transporter ATP-binding protein EcfA2 (288 aa).

The region spanning 3-245 (IKIENLTHVY…VDTLESVGLA (243 aa)) is the ABC transporter domain. An ATP-binding site is contributed by 40 to 47 (GHTGSGKS).

Belongs to the ABC transporter superfamily. Energy-coupling factor EcfA family. Forms a stable energy-coupling factor (ECF) transporter complex composed of 2 membrane-embedded substrate-binding proteins (S component), 2 ATP-binding proteins (A component) and 2 transmembrane proteins (T component).

The protein resides in the cell membrane. ATP-binding (A) component of a common energy-coupling factor (ECF) ABC-transporter complex. Unlike classic ABC transporters this ECF transporter provides the energy necessary to transport a number of different substrates. In Clostridium tetani (strain Massachusetts / E88), this protein is Energy-coupling factor transporter ATP-binding protein EcfA2.